The sequence spans 353 residues: Photosystem II protein D1 (353 aa).

Thr-2 bears the N-acetylthreonine mark. A Phosphothreonine modification is found at Thr-2. Helical transmembrane passes span Tyr-29–Ser-46, His-118–Leu-133, and Trp-142–Ala-156. Chlorophyll a is bound at residue His-118. Tyr-126 is a pheophytin a binding site. 2 residues coordinate [CaMn4O5] cluster: Asp-170 and Glu-189. Residues Phe-197 to Leu-218 traverse the membrane as a helical segment. Chlorophyll a is bound at residue His-198. A quinone contacts are provided by residues His-215 and Ser-264–Phe-265. Residue His-215 participates in Fe cation binding. His-272 provides a ligand contact to Fe cation. The helical transmembrane segment at Phe-274–Leu-288 threads the bilayer. Residues His-332, Glu-333, Asp-342, and Ala-344 each coordinate [CaMn4O5] cluster. The propeptide occupies Ala-345–Gly-353.

This sequence belongs to the reaction center PufL/M/PsbA/D family. As to quaternary structure, PSII is composed of 1 copy each of membrane proteins PsbA, PsbB, PsbC, PsbD, PsbE, PsbF, PsbH, PsbI, PsbJ, PsbK, PsbL, PsbM, PsbT, PsbX, PsbY, PsbZ, Psb30/Ycf12, at least 3 peripheral proteins of the oxygen-evolving complex and a large number of cofactors. It forms dimeric complexes. It depends on The D1/D2 heterodimer binds P680, chlorophylls that are the primary electron donor of PSII, and subsequent electron acceptors. It shares a non-heme iron and each subunit binds pheophytin, quinone, additional chlorophylls, carotenoids and lipids. D1 provides most of the ligands for the Mn4-Ca-O5 cluster of the oxygen-evolving complex (OEC). There is also a Cl(-1) ion associated with D1 and D2, which is required for oxygen evolution. The PSII complex binds additional chlorophylls, carotenoids and specific lipids. as a cofactor. In terms of processing, phosphorylated in both bundle sheath and mesophyll cells, phosphorylation increases when cells are grown under high rather than low light regimes (70 vs 900 umol photons/m-2/s). Post-translationally, PSII is subject to light-induced damage, in particular to D1. Damaged protein is degraded by Deg1 and FtsH proteases and replaced. In maize mesophyll cells D1 degradation is less extensive in grana (stacked) vs stroma (unstacked) lamellae, in part due to exclusion of FtsH from the grana. D1 degradation is faster in bundle sheath cells. Tyr-161 forms a radical intermediate that is referred to as redox-active TyrZ, YZ or Y-Z. In terms of processing, C-terminally processed by CTPA; processing is essential to allow assembly of the oxygen-evolving complex and thus photosynthetic growth.

The protein resides in the plastid. Its subcellular location is the chloroplast thylakoid membrane. It catalyses the reaction 2 a plastoquinone + 4 hnu + 2 H2O = 2 a plastoquinol + O2. Functionally, photosystem II (PSII) is a light-driven water:plastoquinone oxidoreductase that uses light energy to abstract electrons from H(2)O, generating O(2) and a proton gradient subsequently used for ATP formation. It consists of a core antenna complex that captures photons, and an electron transfer chain that converts photonic excitation into a charge separation. The D1/D2 (PsbA/PsbD) reaction center heterodimer binds P680, the primary electron donor of PSII as well as several subsequent electron acceptors. The polypeptide is Photosystem II protein D1 (Zea mays (Maize)).